A 354-amino-acid chain; its full sequence is Uroporphyrinogen decarboxylase (354 aa).

Substrate contacts are provided by residues 27–31 (RQAGR), aspartate 77, tyrosine 154, threonine 209, and histidine 327.

The protein belongs to the uroporphyrinogen decarboxylase family. In terms of assembly, homodimer.

Its subcellular location is the cytoplasm. The enzyme catalyses uroporphyrinogen III + 4 H(+) = coproporphyrinogen III + 4 CO2. Its pathway is porphyrin-containing compound metabolism; protoporphyrin-IX biosynthesis; coproporphyrinogen-III from 5-aminolevulinate: step 4/4. Functionally, catalyzes the decarboxylation of four acetate groups of uroporphyrinogen-III to yield coproporphyrinogen-III. The sequence is that of Uroporphyrinogen decarboxylase from Pseudomonas entomophila (strain L48).